The sequence spans 376 residues: Erythronate-4-phosphate dehydrogenase (376 aa).

Substrate-binding residues include Ser-45 and Thr-67. NAD(+) is bound by residues 127-128, Asp-147, and Thr-176; that span reads QV. The active site involves Arg-209. Asp-233 is an NAD(+) binding site. Residue Glu-238 is part of the active site. The active-site Proton donor is the His-255. Gly-258 contacts NAD(+). Substrate is bound at residue Tyr-259.

This sequence belongs to the D-isomer specific 2-hydroxyacid dehydrogenase family. PdxB subfamily. In terms of assembly, homodimer.

The protein resides in the cytoplasm. The enzyme catalyses 4-phospho-D-erythronate + NAD(+) = (R)-3-hydroxy-2-oxo-4-phosphooxybutanoate + NADH + H(+). It functions in the pathway cofactor biosynthesis; pyridoxine 5'-phosphate biosynthesis; pyridoxine 5'-phosphate from D-erythrose 4-phosphate: step 2/5. Catalyzes the oxidation of erythronate-4-phosphate to 3-hydroxy-2-oxo-4-phosphonooxybutanoate. This chain is Erythronate-4-phosphate dehydrogenase, found in Aliivibrio salmonicida (strain LFI1238) (Vibrio salmonicida (strain LFI1238)).